The chain runs to 262 residues: MAPALLLIPAALASFILAFGTGVEFVRFTSLRPLLGGIPESGGPDARQGWLAALQDRSILAPLAWDLGLLLLFVGQHSLMAAERVKAWTSRYFGVLQRSLYVACTALALQLVMRYWEPIPKGPVLWEARAEPWATWVPLLCFVLHVISWLLIFSILLVFDYAELMGLKQVYYHVLGLGEPLALKSPRALRLFSHLRHPVCVELLTVLWVVPTLGTDRLLLAFLLTLYLGLAHGLDQQDLRYLRAQLQRKLHLLSRPQDGEAE.

Topologically, residues 1 to 4 (MAPA) are nuclear. A helical transmembrane segment spans residues 5 to 28 (LLLIPAALASFILAFGTGVEFVRF). At 29 to 58 (TSLRPLLGGIPESGGPDARQGWLAALQDRS) the chain is on the perinuclear space side. Residues 59–80 (ILAPLAWDLGLLLLFVGQHSLM) traverse the membrane as a helical segment. Over 81 to 97 (AAERVKAWTSRYFGVLQ) the chain is Nuclear. Residues 98–114 (RSLYVACTALALQLVMR) form a helical membrane-spanning segment. Over 115–133 (YWEPIPKGPVLWEARAEPW) the chain is Perinuclear space. The chain crosses the membrane as a helical span at residues 134–164 (ATWVPLLCFVLHVISWLLIFSILLVFDYAEL). The Nuclear portion of the chain corresponds to 165–191 (MGLKQVYYHVLGLGEPLALKSPRALRL). A helical transmembrane segment spans residues 192-210 (FSHLRHPVCVELLTVLWVV). The Perinuclear space segment spans residues 211–216 (PTLGTD). A helical transmembrane segment spans residues 217–234 (RLLLAFLLTLYLGLAHGL). Residues 235 to 262 (DQQDLRYLRAQLQRKLHLLSRPQDGEAE) lie on the Nuclear side of the membrane.

This sequence belongs to the nurim family.

The protein localises to the nucleus inner membrane. This chain is Nurim (NRM), found in Homo sapiens (Human).